Consider the following 1289-residue polypeptide: Pesticidal crystal protein Cry5Ab (1289 aa).

Residues 1263–1289 (PLPTDDQNSEGNTASSTNSDTSMNNNQ) form a disordered region. The segment covering 1274 to 1289 (NTASSTNSDTSMNNNQ) has biased composition (low complexity).

This sequence belongs to the delta endotoxin family.

Functionally, endotoxin with nematicidal activity. The protein is Pesticidal crystal protein Cry5Ab (cry5Ab) of Bacillus thuringiensis subsp. darmstadiensis.